Consider the following 307-residue polypeptide: Aspartate carbamoyltransferase catalytic subunit (307 aa).

R54 and T55 together coordinate carbamoyl phosphate. K83 contributes to the L-aspartate binding site. Carbamoyl phosphate contacts are provided by R104, H132, and Q135. Positions 165 and 228 each coordinate L-aspartate. L267 and P268 together coordinate carbamoyl phosphate.

This sequence belongs to the aspartate/ornithine carbamoyltransferase superfamily. ATCase family. Heterododecamer (2C3:3R2) of six catalytic PyrB chains organized as two trimers (C3), and six regulatory PyrI chains organized as three dimers (R2).

The catalysed reaction is carbamoyl phosphate + L-aspartate = N-carbamoyl-L-aspartate + phosphate + H(+). It participates in pyrimidine metabolism; UMP biosynthesis via de novo pathway; (S)-dihydroorotate from bicarbonate: step 2/3. Its function is as follows. Catalyzes the condensation of carbamoyl phosphate and aspartate to form carbamoyl aspartate and inorganic phosphate, the committed step in the de novo pyrimidine nucleotide biosynthesis pathway. This chain is Aspartate carbamoyltransferase catalytic subunit, found in Clostridium perfringens (strain ATCC 13124 / DSM 756 / JCM 1290 / NCIMB 6125 / NCTC 8237 / Type A).